A 126-amino-acid polypeptide reads, in one-letter code: MAREQTEVRELDEGSYVMIEDTPCKINSYSTAKPGKHGSAKARIDAKGVFDGKKRSLSQPVDAKVWVPIVNRKQGQVVSTDGNDAQVMDLDTYDTFTMRVPEDIDLQPDDEIEYLQYEEQRKITRS.

A Hypusine modification is found at Lys36.

Belongs to the eIF-5A family.

It localises to the cytoplasm. Its function is as follows. Functions by promoting the formation of the first peptide bond. The protein is Translation initiation factor 5A of Haloarcula marismortui (strain ATCC 43049 / DSM 3752 / JCM 8966 / VKM B-1809) (Halobacterium marismortui).